Reading from the N-terminus, the 468-residue chain is MSVEKVLSLIQENEVKFVDLRFTDTKGKEQHISIPAHQIDADFFEEGKMFDGSSVAGWKGINESDMVMMPDASSAVLDPFTEDATLNIRCDILEPATMQGYDRDPRSIAKRAEDFMRSTGVADTVLIGPEPEFFLFDDVKFATDMSGSFFKIDDVEAAWNTGSDYEEGNKGHRPGVKGGYFPVAPVDSSQDIRSAMCLVMEEMGLVVEAHHHEATAGQNEIATRFNTLTTKADEIQIYKYVVHNVAHAFGKTATFMPKPLVGDNGSGMHVHQSLAKDGVNLFAGDKYGGLSEMALYYIGGIIKHARAINAFANPSTNSYKRLVPGFEAPVMLAYSARNRSASIRIPVVPSPKARRIEVRFGDPAANPYLCFASMLMAGLDGIKNKIHPGEAMDKDLYDLPAEESAEIPTVAYSLKDALAELDADREFLTAGGVFSDDFIDSYIELKSQDVERVNMTTHPVEFELYYSV.

In terms of domain architecture, GS beta-grasp spans 13–97 (NEVKFVDLRF…IRCDILEPAT (85 aa)). Residues 105-468 (PRSIAKRAED…PVEFELYYSV (364 aa)) enclose the GS catalytic domain. 2 residues coordinate Mg(2+): E130 and E132. E208 contacts ATP. Residues E213 and E220 each coordinate Mg(2+). Residues 264–265 (NG) and G265 each bind L-glutamate. H269 serves as a coordination point for Mg(2+). ATP contacts are provided by residues 271–273 (HQS) and S273. Residues R321, E327, and R339 each coordinate L-glutamate. ATP is bound by residues R339, R344, and K352. E357 contributes to the Mg(2+) binding site. An L-glutamate-binding site is contributed by R359. Y397 bears the O-AMP-tyrosine mark.

Belongs to the glutamine synthetase family. As to quaternary structure, oligomer of 12 subunits arranged in the form of two hexameric ring. Mg(2+) serves as cofactor.

It is found in the cytoplasm. The catalysed reaction is L-glutamate + NH4(+) + ATP = L-glutamine + ADP + phosphate + H(+). The activity of this enzyme could be controlled by adenylation under conditions of abundant glutamine. Functionally, catalyzes the ATP-dependent biosynthesis of glutamine from glutamate and ammonia. This is Glutamine synthetase from Vibrio alginolyticus.